The sequence spans 120 residues: MYKNIKKFKLESFIAQEIGNLIVSRGIKDPRIHSFLTVVKVEFSKDLINAKVFMGSIKEGASLDNAVKALNNAKGFIQSQIIKRIKVRSTPKLLFVKDDSLSKSFYVNKIIEGLNTTREN.

It belongs to the RbfA family. Monomer. Binds 30S ribosomal subunits, but not 50S ribosomal subunits or 70S ribosomes.

Its subcellular location is the cytoplasm. In terms of biological role, one of several proteins that assist in the late maturation steps of the functional core of the 30S ribosomal subunit. Associates with free 30S ribosomal subunits (but not with 30S subunits that are part of 70S ribosomes or polysomes). Required for efficient processing of 16S rRNA. May interact with the 5'-terminal helix region of 16S rRNA. The polypeptide is Ribosome-binding factor A (Borrelia garinii subsp. bavariensis (strain ATCC BAA-2496 / DSM 23469 / PBi) (Borreliella bavariensis)).